The sequence spans 137 residues: Large ribosomal subunit protein uL16 (137 aa).

It belongs to the universal ribosomal protein uL16 family. In terms of assembly, part of the 50S ribosomal subunit.

Its function is as follows. Binds 23S rRNA and is also seen to make contacts with the A and possibly P site tRNAs. The chain is Large ribosomal subunit protein uL16 from Ruegeria pomeroyi (strain ATCC 700808 / DSM 15171 / DSS-3) (Silicibacter pomeroyi).